A 562-amino-acid polypeptide reads, in one-letter code: Probable E3 ubiquitin-protein ligase ARI7 (562 aa).

Positions 1–39 (MDSEEDMLDAHDMESGEDDFYSGGTDDCNDSDDGEPDYG) are disordered. Residues 27 to 39 (DCNDSDDGEPDYG) show a composition bias toward acidic residues. Residues 133 to 346 (SELTCGICFD…GGFYACNRYE (214 aa)) form a TRIAD supradomain region. 18 residues coordinate Zn(2+): C137, C140, C154, H156, C159, C162, C182, C187, C226, C231, C248, C250, C255, C258, H263, C268, C295, and C298. The RING-type 1 zinc finger occupies 137 to 187 (CGICFDSYPPEKIASVSCGHPFCTTCWTGYISTTINDGPGCLMLRCPDPSC). An IBR-type zinc finger spans residues 206–268 (EKYNRYFLRS…TEEAHRPVDC (63 aa)). The RING-type 2; atypical zinc finger occupies 295 to 325 (CPRCKRPIEKNQGCMHMTCTPPCKYEFCWLC). Residue C308 is part of the active site. Zn(2+) is bound by residues C313, C317, C322, C325, H332, and C342. Residues 524–562 (ACSSKSTSSKSTGCSSKTRGKGKGSSRTGGSSRNPDDNL) form a disordered region. Residues 525-540 (CSSKSTSSKSTGCSSK) show a composition bias toward low complexity.

Belongs to the RBR family. Ariadne subfamily. Requires Zn(2+) as cofactor. As to expression, ubiquitous.

The catalysed reaction is [E2 ubiquitin-conjugating enzyme]-S-ubiquitinyl-L-cysteine + [acceptor protein]-L-lysine = [E2 ubiquitin-conjugating enzyme]-L-cysteine + [acceptor protein]-N(6)-ubiquitinyl-L-lysine.. The protein operates within protein modification; protein ubiquitination. Functionally, might act as an E3 ubiquitin-protein ligase, or as part of E3 complex, which accepts ubiquitin from specific E2 ubiquitin-conjugating enzymes and then transfers it to substrates. The chain is Probable E3 ubiquitin-protein ligase ARI7 (ARI7) from Arabidopsis thaliana (Mouse-ear cress).